The primary structure comprises 129 residues: Lysozyme C-1/C-2 (129 aa).

The C-type lysozyme domain maps to 1–129; it reads KVFERCELAR…VSSYVEGCTL (129 aa). 4 cysteine pairs are disulfide-bonded: Cys-6/Cys-127, Cys-30/Cys-115, Cys-65/Cys-81, and Cys-77/Cys-95. Active-site residues include Glu-35 and Asp-53.

It belongs to the glycosyl hydrolase 22 family. Monomer.

It catalyses the reaction Hydrolysis of (1-&gt;4)-beta-linkages between N-acetylmuramic acid and N-acetyl-D-glucosamine residues in a peptidoglycan and between N-acetyl-D-glucosamine residues in chitodextrins.. In terms of biological role, lysozymes have primarily a bacteriolytic function; those in tissues and body fluids are associated with the monocyte-macrophage system and enhance the activity of immunoagents. This Axis axis (Axis deer) protein is Lysozyme C-1/C-2.